The chain runs to 308 residues: Prephenate dehydratase (308 aa).

The Prephenate dehydratase domain maps to 3–187 (RITYLGPEGT…AHTRFVLVGR (185 aa)). The 78-residue stretch at 201-278 (SVVLGLGNVP…EDVRYLGSWP (78 aa)) folds into the ACT domain.

Homodimer.

The catalysed reaction is prephenate + H(+) = 3-phenylpyruvate + CO2 + H2O. It functions in the pathway amino-acid biosynthesis; L-phenylalanine biosynthesis; phenylpyruvate from prephenate: step 1/1. This Mycobacteroides abscessus (strain ATCC 19977 / DSM 44196 / CCUG 20993 / CIP 104536 / JCM 13569 / NCTC 13031 / TMC 1543 / L948) (Mycobacterium abscessus) protein is Prephenate dehydratase (pheA).